A 60-amino-acid chain; its full sequence is Large ribosomal subunit protein uL30 (60 aa).

Belongs to the universal ribosomal protein uL30 family. As to quaternary structure, part of the 50S ribosomal subunit.

The chain is Large ribosomal subunit protein uL30 from Histophilus somni (strain 2336) (Haemophilus somnus).